The primary structure comprises 34 residues: Endoglucanase 1 (34 aa).

The catalysed reaction is Endohydrolysis of (1-&gt;4)-beta-D-glucosidic linkages in cellulose, lichenin and cereal beta-D-glucans.. The polypeptide is Endoglucanase 1 (Sclerotinia sclerotiorum (White mold)).